A 102-amino-acid chain; its full sequence is Cytochrome c-553 (102 aa).

The signal sequence occupies residues 1–23 (MKRILVVMSICAALAFGVSAAMA). Heme c-binding residues include Cys-33, Cys-36, His-37, and Met-80.

Binds 1 heme c group covalently per subunit.

It is found in the periplasm. Natural electron acceptor for a formate dehydrogenase. The chain is Cytochrome c-553 from Nitratidesulfovibrio vulgaris (strain DSM 19637 / Miyazaki F) (Desulfovibrio vulgaris).